Here is a 90-residue protein sequence, read N- to C-terminus: ATP-dependent Clp protease adapter protein ClpS (90 aa).

This sequence belongs to the ClpS family. As to quaternary structure, binds to the N-terminal domain of the chaperone ClpA.

Functionally, involved in the modulation of the specificity of the ClpAP-mediated ATP-dependent protein degradation. The protein is ATP-dependent Clp protease adapter protein ClpS of Helicobacter pylori (strain J99 / ATCC 700824) (Campylobacter pylori J99).